The primary structure comprises 952 residues: Leucine--tRNA ligase (952 aa).

The 'HIGH' region signature appears at 65–76 (PYPSGAGLHVGH). The 'KMSKS' region motif lies at 727–731 (KMGKS). Lys-730 lines the ATP pocket.

This sequence belongs to the class-I aminoacyl-tRNA synthetase family.

It is found in the cytoplasm. The enzyme catalyses tRNA(Leu) + L-leucine + ATP = L-leucyl-tRNA(Leu) + AMP + diphosphate. This Salinispora arenicola (strain CNS-205) protein is Leucine--tRNA ligase.